The primary structure comprises 416 residues: Lactose permease (416 aa).

Residues 1–13 (MYYLKNTNFWMFG) are Cytoplasmic-facing. The chain crosses the membrane as a helical span at residues 14 to 34 (FFFFFYFFIMGAYFPFFPIWL). Topologically, residues 35–45 (HEVNHISKGDT) are periplasmic. Residues 46–66 (GIIFACISLFSLLFQPIFGLL) traverse the membrane as a helical segment. At 67-75 (SDKLGLRKH) the chain is on the cytoplasmic side. A helical transmembrane segment spans residues 76-96 (LLWVITGMLVMFAPFFIYVFG). Residue proline 97 is a topological domain, periplasmic. Residues 98-118 (LLQVNILLGSIVGGIYLGFIY) traverse the membrane as a helical segment. The Cytoplasmic segment spans residues 119 to 144 (NAGAPAIEAYIEKASRRSNFEFGRAR). Residues 145–165 (MFGCVGWALCASIAGIMFTIN) form a helical membrane-spanning segment. Asparagine 166 is a topological domain (periplasmic). The helical transmembrane segment at 167 to 187 (QFVFWLGSGCAVILALLLLFS) threads the bilayer. Topologically, residues 188 to 211 (KTDVPSSAKVADAVGANNSAFSLK) are cytoplasmic. A helical transmembrane segment spans residues 212–232 (LALELFKQPKLWLISLYVVGV). Residues 233–262 (SCTYDVFDQQFANFFTSFFATGEQGTRVFG) are Periplasmic-facing. The chain crosses the membrane as a helical span at residues 263–283 (YVTTMGELLNASIMFFAPLIV). Topologically, residues 284 to 290 (NRIGGKN) are cytoplasmic. A helical membrane pass occupies residues 291–309 (ALLLAGTIMSVRIIGSHSH). At 310-314 (TALEV) the chain is on the periplasmic side. The helical transmembrane segment at 315–336 (VILKTLHMFEIPFLIVGCFKYI) threads the bilayer. Over 337–347 (TSQFEVRFSAT) the chain is Cytoplasmic. A helical membrane pass occupies residues 348–368 (IYLVCFCFFKQLAMIFMSVLA). Over 369–378 (GKMYESIGFQ) the chain is Periplasmic. Residues 379 to 399 (GAYLVLGIIRVSFTLISVFTL) form a helical membrane-spanning segment. Over 400–416 (SGPGPFSLLRRRESVAL) the chain is Cytoplasmic.

It belongs to the major facilitator superfamily. Oligosaccharide:H(+) symporter (OHS) (TC 2.A.1.5) family.

The protein resides in the cell inner membrane. It catalyses the reaction lactose(in) + H(+)(in) = lactose(out) + H(+)(out). Functionally, responsible for transport of beta-galactosides into the cell, with the concomitant import of a proton (symport system). This chain is Lactose permease (lacY), found in Citrobacter freundii.